The primary structure comprises 280 residues: Chaperone for lacto-N-biosidase (280 aa).

An N-terminal signal peptide occupies residues 1 to 37; that stretch reads MPRRHRFAAAIAAVAVAAVLLVTLTVAVVTHGDGAFA.

Homodimer.

It localises to the secreted. Chaperone required for active expression of the lacto-N-biosidase LnbX. The polypeptide is Chaperone for lacto-N-biosidase (Bifidobacterium longum subsp. longum (strain ATCC 15707 / DSM 20219 / JCM 1217 / NCTC 11818 / E194b)).